Reading from the N-terminus, the 1916-residue chain is Diacylglycerol kinase eta (1916 aa).

Residues 1–36 (MAHIKLDTLDVVQRPGTTRRSNSNSGRSSACSSGSL) are disordered. Positions 19-36 (RRSNSNSGRSSACSSGSL) are enriched in low complexity. In terms of domain architecture, PH spans 82–175 (AIIKEGFLLK…WLGSLKTATT (94 aa)). 2 consecutive Phorbol-ester/DAG-type zinc fingers follow at residues 195–245 (HHHW…IANC) and 268–319 (PHQW…AVAC). A DAGKc domain is found at 350 to 486 (GNFSPLLVFV…DRWSIMVFEK (137 aa)). Basic and acidic residues predominate over residues 623 to 644 (DEINTKERRSSRSLRSSEKEAL). Disordered regions lie at residues 623-648 (DEIN…QSRA), 846-874 (DRGK…KEDN), 1018-1067 (TLCS…DDNP), and 1183-1214 (TSTS…SVKP). One can recognise an SAM domain in the interval 1853–1916 (WSVNEVVTWL…LQAIKDLSEN (64 aa)).

This sequence belongs to the eukaryotic diacylglycerol kinase family.

It localises to the cytoplasm. It catalyses the reaction a 1,2-diacyl-sn-glycerol + ATP = a 1,2-diacyl-sn-glycero-3-phosphate + ADP + H(+). Phosphorylates diacylglycerol (DAG) to generate phosphatidic acid (PA). The sequence is that of Diacylglycerol kinase eta from Drosophila ananassae (Fruit fly).